The chain runs to 309 residues: Protein FdhE homolog (309 aa).

Belongs to the FdhE family.

It is found in the cytoplasm. In terms of biological role, necessary for formate dehydrogenase activity. This is Protein FdhE homolog from Serratia proteamaculans (strain 568).